A 264-amino-acid polypeptide reads, in one-letter code: MSSTESPSRAADKSPRQQVDRLLEGLRWRRLEEPLGFIKVLQWLFAIFAFGSCGSYSGETGAMVRCNNEAKDVSSIIVLFGYPFRLHRIEYEMPLCDDDSSSKTMHLMGDFSAPAEFFVTLGIFSFFYTMAALVVYLRFHKLYTENKRFPLVDFCVTVSFTFFWLVAAAAWGKGLTDVKGATRPSSLTAAMSVCHGEEAVCSAGATPSMGLANISVLFGFINFFLWAGNCWFVFKETPWHGQGQDQGQGPSQESAAEQGAVEKQ.

The Cytoplasmic segment spans residues 1-33 (MSSTESPSRAADKSPRQQVDRLLEGLRWRRLEE). An MARVEL domain is found at 30 to 238 (RLEEPLGFIK…NCWFVFKETP (209 aa)). A helical transmembrane segment spans residues 34 to 54 (PLGFIKVLQWLFAIFAFGSCG). Over 55 to 116 (SYSGETGAMV…LMGDFSAPAE (62 aa)) the chain is Vesicular. The helical transmembrane segment at 117–137 (FFVTLGIFSFFYTMAALVVYL) threads the bilayer. Residues 138-150 (RFHKLYTENKRFP) are Cytoplasmic-facing. Residues 151-171 (LVDFCVTVSFTFFWLVAAAAW) traverse the membrane as a helical segment. Over 172 to 213 (GKGLTDVKGATRPSSLTAAMSVCHGEEAVCSAGATPSMGLAN) the chain is Vesicular. Asparagine 213 carries N-linked (GlcNAc...) asparagine glycosylation. The helical transmembrane segment at 214–234 (ISVLFGFINFFLWAGNCWFVF) threads the bilayer. The Cytoplasmic portion of the chain corresponds to 235–264 (KETPWHGQGQDQGQGPSQESAAEQGAVEKQ). Positions 242–264 (QGQDQGQGPSQESAAEQGAVEKQ) are disordered.

The protein belongs to the synaptophysin/synaptobrevin family. In terms of tissue distribution, skeletal muscle.

It localises to the membrane. Involved in communication between the T-tubular and junctional sarcoplasmic reticulum (SR) membranes. This is Synaptophysin-like protein 2 (SYPL2) from Oryctolagus cuniculus (Rabbit).